We begin with the raw amino-acid sequence, 667 residues long: UvrABC system protein B (667 aa).

The 172-residue stretch at 24-195 (EGLRRGDRFQ…SSGGVFHLRG (172 aa)) folds into the Helicase ATP-binding domain. 37-44 (GVTGSGKT) serves as a coordination point for ATP. A Beta-hairpin motif is present at residues 90–113 (YYDYYQPEAYIPTKDLYIEKDADI). The Helicase C-terminal domain maps to 428-581 (QVDDFIEEVQ…QLMYNIEHDI (154 aa)). Positions 626 to 661 (EEYLALLEEEMWRASSELRYEDAAMLRDEMLRIKRE) constitute a UVR domain.

Belongs to the UvrB family. As to quaternary structure, forms a heterotetramer with UvrA during the search for lesions. Interacts with UvrC in an incision complex.

Its subcellular location is the cytoplasm. The UvrABC repair system catalyzes the recognition and processing of DNA lesions. A damage recognition complex composed of 2 UvrA and 2 UvrB subunits scans DNA for abnormalities. Upon binding of the UvrA(2)B(2) complex to a putative damaged site, the DNA wraps around one UvrB monomer. DNA wrap is dependent on ATP binding by UvrB and probably causes local melting of the DNA helix, facilitating insertion of UvrB beta-hairpin between the DNA strands. Then UvrB probes one DNA strand for the presence of a lesion. If a lesion is found the UvrA subunits dissociate and the UvrB-DNA preincision complex is formed. This complex is subsequently bound by UvrC and the second UvrB is released. If no lesion is found, the DNA wraps around the other UvrB subunit that will check the other stand for damage. In Kosmotoga olearia (strain ATCC BAA-1733 / DSM 21960 / TBF 19.5.1), this protein is UvrABC system protein B.